We begin with the raw amino-acid sequence, 347 residues long: Eukaryotic translation initiation factor 3 subunit I (347 aa).

WD repeat units lie at residues Gly8–Thr47, Gly50–Thr89, Thr91–Glu135, Glu151–Ser190, Leu193–Ser232, and Gly290–Lys329.

The protein belongs to the eIF-3 subunit I family. In terms of assembly, component of the eukaryotic translation initiation factor 3 (eIF-3) complex.

Its subcellular location is the cytoplasm. Its function is as follows. Component of the eukaryotic translation initiation factor 3 (eIF-3) complex, which is involved in protein synthesis of a specialized repertoire of mRNAs and, together with other initiation factors, stimulates binding of mRNA and methionyl-tRNAi to the 40S ribosome. The eIF-3 complex specifically targets and initiates translation of a subset of mRNAs involved in cell proliferation. The sequence is that of Eukaryotic translation initiation factor 3 subunit I from Vanderwaltozyma polyspora (strain ATCC 22028 / DSM 70294 / BCRC 21397 / CBS 2163 / NBRC 10782 / NRRL Y-8283 / UCD 57-17) (Kluyveromyces polysporus).